A 635-amino-acid polypeptide reads, in one-letter code: DNA mismatch repair protein MutL (635 aa).

The segment at Gly359–Tyr399 is disordered. The segment covering Ala364–Ala377 has biased composition (low complexity). The span at Val378–Tyr399 shows a compositional bias: basic and acidic residues.

It belongs to the DNA mismatch repair MutL/HexB family.

In terms of biological role, this protein is involved in the repair of mismatches in DNA. It is required for dam-dependent methyl-directed DNA mismatch repair. May act as a 'molecular matchmaker', a protein that promotes the formation of a stable complex between two or more DNA-binding proteins in an ATP-dependent manner without itself being part of a final effector complex. This is DNA mismatch repair protein MutL from Yersinia pestis bv. Antiqua (strain Antiqua).